A 347-amino-acid chain; its full sequence is Heat-inducible transcription repressor HrcA (347 aa).

Belongs to the HrcA family.

Functionally, negative regulator of class I heat shock genes (grpE-dnaK-dnaJ and groELS operons). Prevents heat-shock induction of these operons. In Lactococcus lactis subsp. lactis (strain IL1403) (Streptococcus lactis), this protein is Heat-inducible transcription repressor HrcA.